Consider the following 934-residue polypeptide: Aconitate hydratase A (934 aa).

Positions 398–454 (EPVDESLPAKRMDSEGAVQKEGEDVAGYNSSRAGHGESAAEGAAGRQSNPVVVSSPN) are disordered. Basic and acidic residues predominate over residues 404-420 (LPAKRMDSEGAVQKEGE). The segment covering 427-445 (SSRAGHGESAAEGAAGRQS) has biased composition (low complexity). 3 residues coordinate [4Fe-4S] cluster: Cys473, Cys539, and Cys542.

This sequence belongs to the aconitase/IPM isomerase family. Monomer. [4Fe-4S] cluster is required as a cofactor.

The enzyme catalyses citrate = D-threo-isocitrate. The catalysed reaction is (2S,3R)-3-hydroxybutane-1,2,3-tricarboxylate = 2-methyl-cis-aconitate + H2O. Its pathway is carbohydrate metabolism; tricarboxylic acid cycle; isocitrate from oxaloacetate: step 2/2. The protein operates within organic acid metabolism; propanoate degradation. Functionally, involved in the catabolism of short chain fatty acids (SCFA) via the tricarboxylic acid (TCA)(acetyl degradation route) and probably via the 2-methylcitrate cycle I (propionate degradation route). Catalyzes the reversible isomerization of citrate to isocitrate via cis-aconitate. Could catalyze the hydration of 2-methyl-cis-aconitate to yield (2R,3S)-2-methylisocitrate. The apo form of AcnA functions as a RNA-binding regulatory protein. The protein is Aconitate hydratase A (acn) of Corynebacterium diphtheriae (strain ATCC 700971 / NCTC 13129 / Biotype gravis).